The primary structure comprises 687 residues: Guanine-nucleotide exchange factor YEL1 (687 aa).

An SEC7 domain is found at isoleucine 57 to threonine 264. A disordered region spans residues alanine 63–asparagine 97. Residues threonine 73 to threonine 83 show a composition bias toward low complexity. Threonine 290 bears the Phosphothreonine mark. Residues serine 293 and serine 299 each carry the phosphoserine modification. A PH domain is found at threonine 412–isoleucine 551.

Belongs to the YEL1 family.

The protein localises to the cytoplasm. It is found in the cell membrane. Its subcellular location is the bud neck. It localises to the bud tip. In terms of biological role, guanine nucleotide exchange factor for ARF3 required for localization of ARF3 to the bud neck and tip and involved in actin patch polarization. This Saccharomyces cerevisiae (strain JAY291) (Baker's yeast) protein is Guanine-nucleotide exchange factor YEL1 (YEL1).